The primary structure comprises 136 residues: Large ribosomal subunit protein uL16 (136 aa).

Belongs to the universal ribosomal protein uL16 family. Part of the 50S ribosomal subunit.

Its function is as follows. Binds 23S rRNA and is also seen to make contacts with the A and possibly P site tRNAs. This chain is Large ribosomal subunit protein uL16, found in Glaesserella parasuis serovar 5 (strain SH0165) (Haemophilus parasuis).